Reading from the N-terminus, the 359-residue chain is tRNA/tmRNA (uracil-C(5))-methyltransferase (359 aa).

5 residues coordinate S-adenosyl-L-methionine: Q183, Y211, N216, E232, and D292. The Nucleophile role is filled by C317. E351 acts as the Proton acceptor in catalysis.

It belongs to the class I-like SAM-binding methyltransferase superfamily. RNA M5U methyltransferase family. TrmA subfamily.

The catalysed reaction is uridine(54) in tRNA + S-adenosyl-L-methionine = 5-methyluridine(54) in tRNA + S-adenosyl-L-homocysteine + H(+). It carries out the reaction uridine(341) in tmRNA + S-adenosyl-L-methionine = 5-methyluridine(341) in tmRNA + S-adenosyl-L-homocysteine + H(+). Functionally, dual-specificity methyltransferase that catalyzes the formation of 5-methyluridine at position 54 (m5U54) in all tRNAs, and that of position 341 (m5U341) in tmRNA (transfer-mRNA). The chain is tRNA/tmRNA (uracil-C(5))-methyltransferase from Pseudomonas fluorescens (strain SBW25).